The following is a 311-amino-acid chain: Glycosyltransferase 6 domain-containing protein 1 (311 aa).

At 1–5 (MKAKG) the chain is on the cytoplasmic side. A helical; Signal-anchor for type II membrane protein membrane pass occupies residues 6-26 (RILLLTSCLFLLLLLLAKIHL). Residues 27–311 (RNHQEEELPL…KVAHYPTDDL (285 aa)) lie on the Lumenal side of the membrane. N-linked (GlcNAc...) asparagine glycosylation is present at N77. Substrate is bound by residues 85–90 (FAVSSF), 176–178 (SVN), and 198–201 (HAWW). E266 (nucleophile) is an active-site residue.

The protein belongs to the glycosyltransferase 6 family. Mn(2+) is required as a cofactor.

The protein resides in the membrane. The polypeptide is Glycosyltransferase 6 domain-containing protein 1 (Glt6d1) (Rattus norvegicus (Rat)).